Consider the following 446-residue polypeptide: SWI/SNF chromatin-remodeling accessory subunit 1 (446 aa).

Residues 1–53 (MQTQARPPVPQGPRFNHPATPQQVRRPINAPLPGQTAQIQGNRGPQPPKKKKR) are disordered. One can recognise an SWIB/MDM2 domain in the interval 220-297 (YQPMKFKLHP…PQRLHQLLQQ (78 aa)).

This sequence belongs to the SMARCD family. As to quaternary structure, component of the multiprotein chromatin-remodeling complexes SWI/SNF: SWI/SNF-A (BAF), SWI/SNF-B (PBAF) and related complexes. The canonical complex contains a catalytic subunit swsn-4, core subunits swsn-1 and swsn-5, and accessory subunits swsn-3, swsn-6, phf-10, dpff-1, swsn-9 and either ham-3/swsn-2.1 or swsn-2.2. May interact with blmp-1. Broadly expressed in all cell types.

It localises to the nucleus. Involved in transcriptional activation and repression of select genes by chromatin remodeling (alteration of DNA-nucleosome topology). Component of SWI/SNF chromatin remodeling complexes that carry out key enzymatic activities, changing chromatin structure by altering DNA-histone contacts within a nucleosome in an ATP-dependent manner. Required for the blmp-1-mediated transcriptional activation or repression of several hypodermal genes such as bed-3. Involved in regulating differentiation, migration and axon pathfinding of specific serotonergic neurons (HSNs). Probably regulates vulva development through the let-60/Ras pathway. May be involved in regulation of developmental processes in the embryo driven by the Wnt pathway. Involved in gonadogenesis. The protein is SWI/SNF chromatin-remodeling accessory subunit 1 of Caenorhabditis elegans.